Consider the following 693-residue polypeptide: Tegument protein UL47 (693 aa).

Disordered stretches follow at residues 1-32 (MSAR…DGVG) and 48-126 (ELEA…GYLG). Residues 48-57 (ELEALEEMAG) are compositionally biased toward acidic residues. Positions 50–75 (EALEEMAGDEPPVRRRREGPRARRRR) are RNA-binding. The Nuclear localization signal signature appears at 63–75 (RRRREGPRARRRR). Residues 63–75 (RRRREGPRARRRR) are compositionally biased toward basic residues. The short motif at 647-670 (SVLGPRVRVVDIMSQFRKLLMGDE) is the Nuclear export signal element.

This sequence belongs to the alphaherpesvirinae HHV-1 UL47 family. As to quaternary structure, interacts with US3 kinase. Interacts with UL31 and UL34; these interactions seem important for efficient virion nuclear egress. Interacts with UL41/VHS. Phosphorylated by US3. This phosphorylation is required for proper nuclear localization.

It is found in the virion tegument. The protein resides in the host nucleus. Its subcellular location is the host cytoplasm. Functionally, tegument protein that can bind to various RNA transcripts. Plays a role in the attenuation of selective viral and cellular mRNA degradation by modulating the activity of host shutoff RNase UL41/VHS. Also plays a role in the primary envelopment of virions in the perinuclear space, probably by interacting with two nuclear egress proteins UL31 and UL34. The sequence is that of Tegument protein UL47 from Homo sapiens (Human).